The following is a 366-amino-acid chain: Anhydro-N-acetylmuramic acid kinase (366 aa).

An ATP-binding site is contributed by Gly10 to Asp17.

It belongs to the anhydro-N-acetylmuramic acid kinase family.

The enzyme catalyses 1,6-anhydro-N-acetyl-beta-muramate + ATP + H2O = N-acetyl-D-muramate 6-phosphate + ADP + H(+). It functions in the pathway amino-sugar metabolism; 1,6-anhydro-N-acetylmuramate degradation. It participates in cell wall biogenesis; peptidoglycan recycling. In terms of biological role, catalyzes the specific phosphorylation of 1,6-anhydro-N-acetylmuramic acid (anhMurNAc) with the simultaneous cleavage of the 1,6-anhydro ring, generating MurNAc-6-P. Is required for the utilization of anhMurNAc either imported from the medium or derived from its own cell wall murein, and thus plays a role in cell wall recycling. The protein is Anhydro-N-acetylmuramic acid kinase of Legionella pneumophila subsp. pneumophila (strain Philadelphia 1 / ATCC 33152 / DSM 7513).